The following is a 339-amino-acid chain: Uroporphyrinogen decarboxylase (339 aa).

Residues 23 to 27 (RQAGR), D72, Y147, T202, and H315 contribute to the substrate site.

This sequence belongs to the uroporphyrinogen decarboxylase family. Homodimer.

It localises to the cytoplasm. It carries out the reaction uroporphyrinogen III + 4 H(+) = coproporphyrinogen III + 4 CO2. It functions in the pathway porphyrin-containing compound metabolism; protoporphyrin-IX biosynthesis; coproporphyrinogen-III from 5-aminolevulinate: step 4/4. Its function is as follows. Catalyzes the decarboxylation of four acetate groups of uroporphyrinogen-III to yield coproporphyrinogen-III. The protein is Uroporphyrinogen decarboxylase of Geobacter sp. (strain M21).